The following is a 53-amino-acid chain: UPF0391 membrane protein msr4317 (53 aa).

2 helical membrane-spanning segments follow: residues 4-24 (WIIILLIVAAAASLLGMPALA) and 33-53 (ILIGIVLVIFLLVVLGIFAVT).

It belongs to the UPF0391 family.

It is found in the cell membrane. In Mesorhizobium japonicum (strain LMG 29417 / CECT 9101 / MAFF 303099) (Mesorhizobium loti (strain MAFF 303099)), this protein is UPF0391 membrane protein msr4317.